We begin with the raw amino-acid sequence, 99 residues long: MVELVITEKRDNPILKRKELKYTLKFENARTPSREEIKEIIAKHEGAQKELIIVESNKQLTGKHEIVGYTKIYQDKASAMLYEPDYELIRNGLKQKEAK.

This sequence belongs to the eukaryotic ribosomal protein eS24 family.

The polypeptide is Small ribosomal subunit protein eS24 (rps2e) (Thermoplasma volcanium (strain ATCC 51530 / DSM 4299 / JCM 9571 / NBRC 15438 / GSS1)).